The following is a 382-amino-acid chain: Succinate--CoA ligase [ADP-forming] subunit beta 1 (382 aa).

The region spanning 9-235 (KQIFAKHGIR…ATEEDPLERE (227 aa)) is the ATP-grasp domain. Residues lysine 45, 52–54 (GRG), glutamate 91, leucine 94, and glutamate 99 each bind ATP. Asparagine 191 and aspartate 204 together coordinate Mg(2+). Asparagine 255 lines the substrate pocket.

This sequence belongs to the succinate/malate CoA ligase beta subunit family. As to quaternary structure, heterotetramer of two alpha and two beta subunits. Requires Mg(2+) as cofactor.

The catalysed reaction is succinate + ATP + CoA = succinyl-CoA + ADP + phosphate. It catalyses the reaction GTP + succinate + CoA = succinyl-CoA + GDP + phosphate. It functions in the pathway carbohydrate metabolism; tricarboxylic acid cycle; succinate from succinyl-CoA (ligase route): step 1/1. In terms of biological role, succinyl-CoA synthetase functions in the citric acid cycle (TCA), coupling the hydrolysis of succinyl-CoA to the synthesis of either ATP or GTP and thus represents the only step of substrate-level phosphorylation in the TCA. The beta subunit provides nucleotide specificity of the enzyme and binds the substrate succinate, while the binding sites for coenzyme A and phosphate are found in the alpha subunit. The chain is Succinate--CoA ligase [ADP-forming] subunit beta 1 from Archaeoglobus fulgidus (strain ATCC 49558 / DSM 4304 / JCM 9628 / NBRC 100126 / VC-16).